The primary structure comprises 503 residues: ATP synthase subunit alpha (503 aa).

Residue 170–177 (GDRQTGKT) coordinates ATP.

This sequence belongs to the ATPase alpha/beta chains family. F-type ATPases have 2 components, CF(1) - the catalytic core - and CF(0) - the membrane proton channel. CF(1) has five subunits: alpha(3), beta(3), gamma(1), delta(1), epsilon(1). CF(0) has three main subunits: a(1), b(2) and c(9-12). The alpha and beta chains form an alternating ring which encloses part of the gamma chain. CF(1) is attached to CF(0) by a central stalk formed by the gamma and epsilon chains, while a peripheral stalk is formed by the delta and b chains.

The protein resides in the cell inner membrane. The enzyme catalyses ATP + H2O + 4 H(+)(in) = ADP + phosphate + 5 H(+)(out). In terms of biological role, produces ATP from ADP in the presence of a proton gradient across the membrane. The alpha chain is a regulatory subunit. In Geobacter metallireducens (strain ATCC 53774 / DSM 7210 / GS-15), this protein is ATP synthase subunit alpha.